The following is a 230-amino-acid chain: Ribose-5-phosphate isomerase A (230 aa).

Residues 31–34 (TGST), 87–90 (DGAD), and 100–103 (KGGG) contribute to the substrate site. Glu109 serves as the catalytic Proton acceptor. Lys127 serves as a coordination point for substrate.

Belongs to the ribose 5-phosphate isomerase family. As to quaternary structure, homodimer.

It catalyses the reaction aldehydo-D-ribose 5-phosphate = D-ribulose 5-phosphate. Its pathway is carbohydrate degradation; pentose phosphate pathway; D-ribose 5-phosphate from D-ribulose 5-phosphate (non-oxidative stage): step 1/1. Its function is as follows. Catalyzes the reversible conversion of ribose-5-phosphate to ribulose 5-phosphate. This chain is Ribose-5-phosphate isomerase A, found in Lactobacillus delbrueckii subsp. bulgaricus (strain ATCC 11842 / DSM 20081 / BCRC 10696 / JCM 1002 / NBRC 13953 / NCIMB 11778 / NCTC 12712 / WDCM 00102 / Lb 14).